Consider the following 318-residue polypeptide: (1S)-1,7-diacetoxy-luvungin A aldo-keto reductase (318 aa).

Tyrosine 54 functions as the Proton donor in the catalytic mechanism.

Belongs to the aldo/keto reductase family. Expressed in flowers, maturing fruits and in juice vesicles.

It catalyses the reaction (1S)-1,7-diacetoxy-luvungin A + AH2 + H2O = (1R,2R,3S,8R,10R,11R,15S,16S)-3-(acetyloxy)-15-[(4R)-4-[(2S)-3,3-dimethyloxiran-2-yl]-1,4-dihydroxybutan-2-yl]-2,7,7,11,16-pentamethyl-5-oxo-6-oxatetracyclo[9.7.0.0(2,8).0(12,16)]octadec-12-en-10-yl acetate + acetate + A + H(+). It participates in secondary metabolite biosynthesis; terpenoid biosynthesis. Its function is as follows. Aldo-keto reductase involved in the biosynthesis of limonoids triterpene natural products such as limonin, a compound with insecticidal activity responsible for the bitter taste in citrus. Can use (1S)-1,7-diacetoxy-luvungin A as substrate. This chain is (1S)-1,7-diacetoxy-luvungin A aldo-keto reductase, found in Citrus sinensis (Sweet orange).